The primary structure comprises 304 residues: Nod factor export ATP-binding protein I (304 aa).

Residues 6-236 form the ABC transporter domain; it reads IDFQQVEKRY…EIGCDVIEIY (231 aa). 38 to 45 lines the ATP pocket; the sequence is GPNGAGKT.

Belongs to the ABC transporter superfamily. Lipooligosaccharide exporter (TC 3.A.1.102) family. In terms of assembly, the complex is composed of two ATP-binding proteins (NodI) and two transmembrane proteins (NodJ).

Its subcellular location is the cell inner membrane. In terms of biological role, part of the ABC transporter complex NodIJ involved in the export of the nodulation factors (Nod factors), the bacterial signal molecules that induce symbiosis and subsequent nodulation induction. Nod factors are LCO (lipo-chitin oligosaccharide), a modified beta-1,4-linked N-acetylglucosamine oligosaccharide. This subunit is responsible for energy coupling to the transport system. The sequence is that of Nod factor export ATP-binding protein I from Burkholderia pseudomallei (strain 1710b).